The chain runs to 180 residues: tRNA (cytidine(56)-2'-O)-methyltransferase (180 aa).

S-adenosyl-L-methionine-binding positions include Leu85, 114 to 118, and 132 to 139; these read GAEKV and VGNQPHSE.

The protein belongs to the aTrm56 family. Homodimer.

It localises to the cytoplasm. The catalysed reaction is cytidine(56) in tRNA + S-adenosyl-L-methionine = 2'-O-methylcytidine(56) in tRNA + S-adenosyl-L-homocysteine + H(+). In terms of biological role, specifically catalyzes the AdoMet-dependent 2'-O-ribose methylation of cytidine at position 56 in tRNAs. The chain is tRNA (cytidine(56)-2'-O)-methyltransferase from Thermococcus kodakarensis (strain ATCC BAA-918 / JCM 12380 / KOD1) (Pyrococcus kodakaraensis (strain KOD1)).